The primary structure comprises 397 residues: Phosphoglycerate kinase (397 aa).

Residues 21 to 23, arginine 36, 59 to 62, arginine 114, and arginine 147 each bind substrate; these read DMN and HLGR. ATP-binding positions include lysine 198, glutamate 320, and 346–349; that span reads GGDT.

Belongs to the phosphoglycerate kinase family. As to quaternary structure, monomer.

The protein localises to the cytoplasm. It carries out the reaction (2R)-3-phosphoglycerate + ATP = (2R)-3-phospho-glyceroyl phosphate + ADP. Its pathway is carbohydrate degradation; glycolysis; pyruvate from D-glyceraldehyde 3-phosphate: step 2/5. The polypeptide is Phosphoglycerate kinase (Neisseria gonorrhoeae (strain NCCP11945)).